We begin with the raw amino-acid sequence, 487 residues long: Glutamyl-tRNA(Gln) amidotransferase subunit A (487 aa).

Active-site charge relay system residues include lysine 74 and serine 149. Residue serine 173 is the Acyl-ester intermediate of the active site.

It belongs to the amidase family. GatA subfamily. Heterotrimer of A, B and C subunits.

The catalysed reaction is L-glutamyl-tRNA(Gln) + L-glutamine + ATP + H2O = L-glutaminyl-tRNA(Gln) + L-glutamate + ADP + phosphate + H(+). Its function is as follows. Allows the formation of correctly charged Gln-tRNA(Gln) through the transamidation of misacylated Glu-tRNA(Gln) in organisms which lack glutaminyl-tRNA synthetase. The reaction takes place in the presence of glutamine and ATP through an activated gamma-phospho-Glu-tRNA(Gln). In Synechococcus sp. (strain WH7803), this protein is Glutamyl-tRNA(Gln) amidotransferase subunit A.